The chain runs to 266 residues: Indole-3-glycerol phosphate synthase (266 aa).

The protein belongs to the TrpC family.

The catalysed reaction is 1-(2-carboxyphenylamino)-1-deoxy-D-ribulose 5-phosphate + H(+) = (1S,2R)-1-C-(indol-3-yl)glycerol 3-phosphate + CO2 + H2O. It participates in amino-acid biosynthesis; L-tryptophan biosynthesis; L-tryptophan from chorismate: step 4/5. This is Indole-3-glycerol phosphate synthase from Acidovorax sp. (strain JS42).